We begin with the raw amino-acid sequence, 133 residues long: DNA-directed RNA polymerases I and III subunit RPAC2 (133 aa).

The residue at position 1 (methionine 1) is an N-acetylmethionine. The interval methionine 1–glutamate 22 is disordered.

Belongs to the archaeal Rpo11/eukaryotic RPB11/RPC19 RNA polymerase subunit family. Component of the RNA polymerase I and RNA polymerase III complexes consisting of at least 13 and 17 subunits, respectively. The transcriptionally active RNA polymerase III complex consists of a ten-subunit horseshoe-shaped catalytic core composed of POLR3A/RPC1, POLR3B/RPC2, POLR1C/RPAC1, POLR1D/RPAC2, POLR3K/RPC10, POLR2E/RPABC1, POLR2F/RPABC2, POLR2H/RPABC3, POLR2K/RPABC4 and POLR2L/RPABC5; a mobile stalk composed of two subunits POLR3H/RPC8 and CRCP/RPC9, protruding from the core and functioning primarily in transcription initiation; and additional subunits homologous to general transcription factors of the RNA polymerase II machinery, POLR3C/RPC3-POLR3F/RPC6-POLR3G/RPC7 heterotrimer required for transcription initiation and POLR3D/RPC4-POLR3E/RPC5 heterodimer involved in both transcription initiation and termination.

It is found in the nucleus. In terms of biological role, DNA-dependent RNA polymerase catalyzes the transcription of DNA into RNA using the four ribonucleoside triphosphates as substrates. Common component of RNA polymerases I and III which synthesize ribosomal RNA precursor pre-rRNA and short non-coding RNAs including 5S rRNA, snRNAs, tRNAs and miRNAs, respectively. This is DNA-directed RNA polymerases I and III subunit RPAC2 (POLR1D) from Bos taurus (Bovine).